A 133-amino-acid chain; its full sequence is Profilin-2 (133 aa).

Cys13 and Cys117 are oxidised to a cystine. The Involved in PIP2 interaction motif lies at 83-99; sequence AVIRGKKGSGGITIKKT. Thr113 bears the Phosphothreonine mark.

This sequence belongs to the profilin family. In terms of assembly, occurs in many kinds of cells as a complex with monomeric actin in a 1:1 ratio. In terms of processing, phosphorylated by MAP kinases.

The protein resides in the cytoplasm. The protein localises to the cytoskeleton. Binds to actin and affects the structure of the cytoskeleton. At high concentrations, profilin prevents the polymerization of actin, whereas it enhances it at low concentrations. This chain is Profilin-2, found in Betula pendula (European white birch).